Reading from the N-terminus, the 291-residue chain is ATP synthase gamma chain (291 aa).

It belongs to the ATPase gamma chain family. As to quaternary structure, F-type ATPases have 2 components, CF(1) - the catalytic core - and CF(0) - the membrane proton channel. CF(1) has five subunits: alpha(3), beta(3), gamma(1), delta(1), epsilon(1). CF(0) has three main subunits: a, b and c.

Its subcellular location is the cell inner membrane. In terms of biological role, produces ATP from ADP in the presence of a proton gradient across the membrane. The gamma chain is believed to be important in regulating ATPase activity and the flow of protons through the CF(0) complex. This Syntrophus aciditrophicus (strain SB) protein is ATP synthase gamma chain.